Here is a 1096-residue protein sequence, read N- to C-terminus: DNA-directed RNA polymerase subunit beta (1096 aa).

It belongs to the RNA polymerase beta chain family. In terms of assembly, in plastids the minimal PEP RNA polymerase catalytic core is composed of four subunits: alpha, beta, beta', and beta''. When a (nuclear-encoded) sigma factor is associated with the core the holoenzyme is formed, which can initiate transcription.

It is found in the plastid. The protein localises to the chloroplast. It carries out the reaction RNA(n) + a ribonucleoside 5'-triphosphate = RNA(n+1) + diphosphate. In terms of biological role, DNA-dependent RNA polymerase catalyzes the transcription of DNA into RNA using the four ribonucleoside triphosphates as substrates. This Guillardia theta (Cryptophyte) protein is DNA-directed RNA polymerase subunit beta.